A 320-amino-acid polypeptide reads, in one-letter code: MIKKIGVLTSGGDAPGMNAAIRGVVRAALTEGLEVFGVYDGYLGLYEDRMIQLDRYSVSDMINRGGTFLGSARFPEFREEHIRAVAIENMKKRGIDALVVIGGDGSYMGAKRLTEMGFPCIGLPGTIDNDVAGTDYTIGYFTALHTVVEAIDRLRDTSSSHQRISIVEVMGRYCGDLTLAAAIAGGCEFIVLPEVEFNREDLVAEIKAGIAKGKKHAIVAITEHICDIDELAKYIETETKRETRATVLGHIQRGGSPVPYDRILASRMGAYAIELLLQGHGGRCVGIQNEKMVHHDIIDAIENMKRPFKGDWLECAKKLY.

Glycine 12 contributes to the ATP binding site. Residues 22-26 (RGVVR) and 55-60 (RYSVSD) contribute to the ADP site. Residues 73 to 74 (RF) and 103 to 106 (GDGS) contribute to the ATP site. Aspartate 104 lines the Mg(2+) pocket. A substrate-binding site is contributed by 126-128 (TID). Residue aspartate 128 is the Proton acceptor of the active site. Arginine 155 lines the ADP pocket. Substrate-binding positions include arginine 163 and 170 to 172 (MGR). Residues 186–188 (GCE), lysine 212, and 214–216 (KKH) each bind ADP. Substrate-binding positions include glutamate 223, arginine 244, and 250-253 (HIQR).

It belongs to the phosphofructokinase type A (PFKA) family. ATP-dependent PFK group I subfamily. Prokaryotic clade 'B1' sub-subfamily. Homotetramer. It depends on Mg(2+) as a cofactor.

It localises to the cytoplasm. The catalysed reaction is beta-D-fructose 6-phosphate + ATP = beta-D-fructose 1,6-bisphosphate + ADP + H(+). The protein operates within carbohydrate degradation; glycolysis; D-glyceraldehyde 3-phosphate and glycerone phosphate from D-glucose: step 3/4. Allosterically activated by ADP and other diphosphonucleosides, and allosterically inhibited by phosphoenolpyruvate. Its function is as follows. Catalyzes the phosphorylation of D-fructose 6-phosphate to fructose 1,6-bisphosphate by ATP, the first committing step of glycolysis. This Cronobacter sakazakii (strain ATCC BAA-894) (Enterobacter sakazakii) protein is ATP-dependent 6-phosphofructokinase.